The chain runs to 251 residues: Capsid protein (251 aa).

The Bipartite nuclear localization signal motif lies at 3–20 (KRDLPWRSMAGTSKVSRN). Positions 35–49 (KAAEWVNRPMYRKPR) match the Nuclear localization signal motif. A zinc finger spans residues 63 to 80 (CEGPCKVQSFEQRHDISH). Positions 96–117 (ITHRVGKRFCVKSVYILGKIWM) match the Nuclear export signal motif. The Bipartite nuclear localization signal signature appears at 195 to 242 (KRFWKVNNHVVYNHQEAGKYENHTENALLLYMACTHASNPVYATLKIR).

The protein belongs to the geminiviridae capsid protein family. As to quaternary structure, homomultimer. Binds to single-stranded and double-stranded viral DNA. Interacts (via nuclear localization signals) with host importin alpha-1a.

It localises to the virion. It is found in the host nucleus. Encapsidates the viral DNA into characteristic twinned ('geminate') particles. Binds the genomic viral ssDNA and shuttles it into and out of the cell nucleus. The CP of bipartite geminiviruses is not required for cell-to-cell or systemic movement. The polypeptide is Capsid protein (Tomato mottle virus (isolate Florida) (ToMoV)).